Here is a 126-residue protein sequence, read N- to C-terminus: Holo-[acyl-carrier-protein] synthase (126 aa).

Positions 9 and 58 each coordinate Mg(2+).

It belongs to the P-Pant transferase superfamily. AcpS family. Requires Mg(2+) as cofactor.

The protein localises to the cytoplasm. It carries out the reaction apo-[ACP] + CoA = holo-[ACP] + adenosine 3',5'-bisphosphate + H(+). In terms of biological role, transfers the 4'-phosphopantetheine moiety from coenzyme A to a Ser of acyl-carrier-protein. This Escherichia fergusonii (strain ATCC 35469 / DSM 13698 / CCUG 18766 / IAM 14443 / JCM 21226 / LMG 7866 / NBRC 102419 / NCTC 12128 / CDC 0568-73) protein is Holo-[acyl-carrier-protein] synthase.